A 78-amino-acid chain; its full sequence is Large ribosomal subunit protein bL28 (78 aa).

Residues 1–31 (MAAHCQVTGAEPGFGHSISHSHRRNKRRFDP) are disordered.

Belongs to the bacterial ribosomal protein bL28 family.

The protein is Large ribosomal subunit protein bL28 of Paenarthrobacter aurescens (strain TC1).